The primary structure comprises 357 residues: DNA replication and repair protein RecF (357 aa).

Position 30-37 (30-37 (GANGSGKT)) interacts with ATP.

It belongs to the RecF family.

It is found in the cytoplasm. Its function is as follows. The RecF protein is involved in DNA metabolism; it is required for DNA replication and normal SOS inducibility. RecF binds preferentially to single-stranded, linear DNA. It also seems to bind ATP. The sequence is that of DNA replication and repair protein RecF from Escherichia coli O139:H28 (strain E24377A / ETEC).